We begin with the raw amino-acid sequence, 361 residues long: uncharacterized protein (361 aa).

41–48 lines the ATP pocket; it reads GPLNSGKT.

Belongs to the archaeal ATPase family.

This is an uncharacterized protein from Methanocaldococcus jannaschii (strain ATCC 43067 / DSM 2661 / JAL-1 / JCM 10045 / NBRC 100440) (Methanococcus jannaschii).